The chain runs to 1141 residues: MSKKFAEYSQFDLSKVNKDVLKKWDENQVFAKSMTEREGCPSFVFFEGPPSANGMPGIHHVMARSIKDIFCRYKTMKGYQVKRKAGWDTHGLPVELGVEKSLGITKEDIGKTISVAEYNAHCRQDVMKFTKEWEDLTHKMGYWVDMKHPYITYDNRYIETLWWLLKQLYKKGLLYKGYTIQPYSPAAGTGLSSHELNQPGCYRDVKDTTVVAQFKMKNPKPEMAQWGTPYFLAWTTTPWTLPSNTALCVGPKIDYVAVQSYNAYTGQPITVVLAKALLNAHFNPKAAELKLEDYKAGDKLVPFKVIAEYKGPDLVGMEYEQLIPWVNPGEGAFRVILGDYVTTEDGTGIVHIAPTFGADDAQVAKAAGIPPLQLVNKKGELRPMVDLTGKFYTLDELDEDFIKQRVNIDLYKEYAGRFVKNAYDPNLSDQDESLDVSICMMMKVNNQAFKIEKHVHNYPHCWRTDKPVLYYPLDSWFIRSTACKERMIELNKTINWKPESTGTGRFGKWLENLNDWNLSRSRYWGTPLPIWRTEDNSDEKCIESVEELYNEIEKSVAAGYMQSNPYKDKGFVPGEYNEENYNKIDLHRPYVDDIILVSKDGKPMKREADLIDVWFDSGAMPYAQIHYPFENKELLDSHQVYPADFIAEGVDQTRGWFFTLHAIATMVFDSVSYKAVISNGLVLDKNGNKMSKRLGNAVDPFSTIEQYGSDPLRWYMITNSSPWDNLKFDVDGIEEVRRKFFGTLYNTYSFFALYANVDGFEYKEADLPMNERPEIDRWILSVLNTLVKEVDTCYNEYEPTKAGRLISDFVNDNLSNWYVRLNRKRFWGGGFTQDKLSAYQTLYTCLETVAKLMAPIAPFYADRLYSDLIGVTGRDNVVSVHLAKFPEYNEKMVDKELEAQMQMAQDVTSMVLALRRKVNIKVRQPLQCIMIPVVDEVQKAHIEAVKALIMSEVNVKEIKFVDGAAGVLVKKVKCDFKKLGPKFGKQMKAVAAAVAEMSQEAIAELEKNGKYTFDLGGAEAVIESADVEIFSEDIPGWLVANEGKLTVALEVTVTDELRREGIARELVNRIQNIRKSSGFEITDKIKLTLSKNPQTDDAVNEYNSYICNQVLGTSLTLADEVKDGTELNFDDFSLFVNVVKE.

The short motif at 50-60 is the 'HIGH' region element; the sequence is PSANGMPGIHH. Residues 689–693 carry the 'KMSKS' region motif; that stretch reads KMSKR. Lys692 lines the ATP pocket.

Belongs to the class-I aminoacyl-tRNA synthetase family. IleS type 2 subfamily. In terms of assembly, monomer. Requires Zn(2+) as cofactor.

The protein resides in the cytoplasm. It carries out the reaction tRNA(Ile) + L-isoleucine + ATP = L-isoleucyl-tRNA(Ile) + AMP + diphosphate. Functionally, catalyzes the attachment of isoleucine to tRNA(Ile). As IleRS can inadvertently accommodate and process structurally similar amino acids such as valine, to avoid such errors it has two additional distinct tRNA(Ile)-dependent editing activities. One activity is designated as 'pretransfer' editing and involves the hydrolysis of activated Val-AMP. The other activity is designated 'posttransfer' editing and involves deacylation of mischarged Val-tRNA(Ile). This is Isoleucine--tRNA ligase from Bacteroides fragilis (strain YCH46).